We begin with the raw amino-acid sequence, 242 residues long: 1-(5-phosphoribosyl)-5-[(5-phosphoribosylamino)methylideneamino] imidazole-4-carboxamide isomerase (242 aa).

The active-site Proton acceptor is the D10. D131 acts as the Proton donor in catalysis.

Belongs to the HisA/HisF family.

Its subcellular location is the cytoplasm. The enzyme catalyses 1-(5-phospho-beta-D-ribosyl)-5-[(5-phospho-beta-D-ribosylamino)methylideneamino]imidazole-4-carboxamide = 5-[(5-phospho-1-deoxy-D-ribulos-1-ylimino)methylamino]-1-(5-phospho-beta-D-ribosyl)imidazole-4-carboxamide. It functions in the pathway amino-acid biosynthesis; L-histidine biosynthesis; L-histidine from 5-phospho-alpha-D-ribose 1-diphosphate: step 4/9. In Bifidobacterium animalis subsp. lactis (strain AD011), this protein is 1-(5-phosphoribosyl)-5-[(5-phosphoribosylamino)methylideneamino] imidazole-4-carboxamide isomerase.